Here is a 208-residue protein sequence, read N- to C-terminus: ATP phosphoribosyltransferase (208 aa).

Belongs to the ATP phosphoribosyltransferase family. Short subfamily. Heteromultimer composed of HisG and HisZ subunits.

It localises to the cytoplasm. The enzyme catalyses 1-(5-phospho-beta-D-ribosyl)-ATP + diphosphate = 5-phospho-alpha-D-ribose 1-diphosphate + ATP. The protein operates within amino-acid biosynthesis; L-histidine biosynthesis; L-histidine from 5-phospho-alpha-D-ribose 1-diphosphate: step 1/9. Catalyzes the condensation of ATP and 5-phosphoribose 1-diphosphate to form N'-(5'-phosphoribosyl)-ATP (PR-ATP). Has a crucial role in the pathway because the rate of histidine biosynthesis seems to be controlled primarily by regulation of HisG enzymatic activity. The protein is ATP phosphoribosyltransferase of Thermotoga petrophila (strain ATCC BAA-488 / DSM 13995 / JCM 10881 / RKU-1).